The primary structure comprises 214 residues: GTP-binding nuclear protein GSP1/Ran (214 aa).

Residues 4-168 (EVPTFKLVLV…LWLARKLAGN (165 aa)) enclose the Small GTPase Ran-type domain. 15 to 22 (DGGTGKTT) provides a ligand contact to GTP. The segment at 34–42 (KKYIATIGV) is switch-I. GTP contacts are provided by residues glycine 65, 119–122 (NKVD), and 147–149 (SAK). The interval 65 to 81 (GQEKFGGLRDGYYINAQ) is switch-II.

It belongs to the small GTPase superfamily. Ran family. As to quaternary structure, found in a nuclear export complex with RanGTP, exportin and pre-miRNA.

It localises to the nucleus. Functionally, GTP-binding protein involved in nucleocytoplasmic transport. Required for the import of protein into the nucleus and also for RNA export. Involved in chromatin condensation and control of cell cycle. The chain is GTP-binding nuclear protein GSP1/Ran (GSP1) from Eremothecium gossypii (strain ATCC 10895 / CBS 109.51 / FGSC 9923 / NRRL Y-1056) (Yeast).